The sequence spans 354 residues: Methylthioribose-1-phosphate isomerase (354 aa).

Residues 49–51, Arg-92, and Gln-199 contribute to the substrate site; that span reads RGA. The active-site Proton donor is the Asp-240. A substrate-binding site is contributed by 250–251; that stretch reads NK.

It belongs to the eIF-2B alpha/beta/delta subunits family. MtnA subfamily.

It carries out the reaction 5-(methylsulfanyl)-alpha-D-ribose 1-phosphate = 5-(methylsulfanyl)-D-ribulose 1-phosphate. It participates in amino-acid biosynthesis; L-methionine biosynthesis via salvage pathway; L-methionine from S-methyl-5-thio-alpha-D-ribose 1-phosphate: step 1/6. Catalyzes the interconversion of methylthioribose-1-phosphate (MTR-1-P) into methylthioribulose-1-phosphate (MTRu-1-P). The protein is Methylthioribose-1-phosphate isomerase of Koribacter versatilis (strain Ellin345).